A 314-amino-acid polypeptide reads, in one-letter code: CBASS oligonucleotide cyclase CdnC (314 aa).

Residue Lys-60 participates in ATP binding. Asp-73 and Asp-75 together coordinate Mg(2+). Residues Asp-75, Lys-186, 197–199 (KSF), and Asn-263 each bind ATP.

It belongs to the CD-NTase family. C01 subfamily. As to quaternary structure, forms complexes with Cap7 with 1:1 and 2:2 stoichimetry, and a 1:1:6 CdnC:Cap7:Cap6 complex. The cofactor is Mg(2+).

Cyclic nucleotide synthase (second messenger synthase) of a CBASS antivirus system. CBASS (cyclic oligonucleotide-based antiphage signaling system) provides immunity against bacteriophage. The CD-NTase protein synthesizes cyclic nucleotides in response to infection; these serve as specific second messenger signals. The signals activate a diverse range of effectors, leading to bacterial cell death and thus abortive phage infection. A type III CBASS system. Expression of this CBASS system (Cap18-Cap6-Cap7-CdnC-CapW-Cap17) in a susceptible E.coli (strain MG1655) confers resistance to bacteriophage P1. Probable cyclic nucleotide synthase that upon activation catalyzes the synthesis of a cyclic nucleotide. A cyclase activity for this enzyme was not identified in. The polypeptide is CBASS oligonucleotide cyclase CdnC (Escherichia coli (strain KTE188)).